The sequence spans 288 residues: Intermediate transcription factor 3 small subunit (288 aa).

Belongs to the orthopoxvirus OPG134 family. As to quaternary structure, heterodimer of a 45 kDa (A23R) and a 32 kDa (A8R) subunit to form the virus intermediate transcription factor (VITF)-3.

Its function is as follows. Acts with RNA polymerase to initiate transcription from intermediate gene promoters. This Vaccinia virus (strain Copenhagen) (VACV) protein is Intermediate transcription factor 3 small subunit (OPG134).